The chain runs to 93 residues: Cell division topological specificity factor (93 aa).

Belongs to the MinE family.

Prevents the cell division inhibition by proteins MinC and MinD at internal division sites while permitting inhibition at polar sites. This ensures cell division at the proper site by restricting the formation of a division septum at the midpoint of the long axis of the cell. The sequence is that of Cell division topological specificity factor from Alkaliphilus oremlandii (strain OhILAs) (Clostridium oremlandii (strain OhILAs)).